The sequence spans 270 residues: 4-hydroxy-tetrahydrodipicolinate reductase (270 aa).

7 to 12 (GANGKM) contacts NAD(+). An NADP(+)-binding site is contributed by arginine 34. Residues 97–99 (GTT) and 121–124 (SGNM) each bind NAD(+). Histidine 155 serves as the catalytic Proton donor/acceptor. (S)-2,3,4,5-tetrahydrodipicolinate is bound at residue histidine 156. Residue lysine 159 is the Proton donor of the active site. Position 165-166 (165-166 (GT)) interacts with (S)-2,3,4,5-tetrahydrodipicolinate.

This sequence belongs to the DapB family.

It localises to the cytoplasm. It catalyses the reaction (S)-2,3,4,5-tetrahydrodipicolinate + NAD(+) + H2O = (2S,4S)-4-hydroxy-2,3,4,5-tetrahydrodipicolinate + NADH + H(+). The enzyme catalyses (S)-2,3,4,5-tetrahydrodipicolinate + NADP(+) + H2O = (2S,4S)-4-hydroxy-2,3,4,5-tetrahydrodipicolinate + NADPH + H(+). Its pathway is amino-acid biosynthesis; L-lysine biosynthesis via DAP pathway; (S)-tetrahydrodipicolinate from L-aspartate: step 4/4. Catalyzes the conversion of 4-hydroxy-tetrahydrodipicolinate (HTPA) to tetrahydrodipicolinate. In Bartonella quintana (strain Toulouse) (Rochalimaea quintana), this protein is 4-hydroxy-tetrahydrodipicolinate reductase.